A 905-amino-acid chain; its full sequence is Protein translocase subunit SecA (905 aa).

Residues Q89, 107 to 111, and D502 each bind ATP; that span reads GEGKT. Residues C889, C891, C900, and H901 each coordinate Zn(2+).

Belongs to the SecA family. In terms of assembly, monomer and homodimer. Part of the essential Sec protein translocation apparatus which comprises SecA, SecYEG and auxiliary proteins SecDF-YajC and YidC. Requires Zn(2+) as cofactor.

It localises to the cell inner membrane. The protein resides in the cytoplasm. The catalysed reaction is ATP + H2O + cellular proteinSide 1 = ADP + phosphate + cellular proteinSide 2.. Its function is as follows. Part of the Sec protein translocase complex. Interacts with the SecYEG preprotein conducting channel. Has a central role in coupling the hydrolysis of ATP to the transfer of proteins into and across the cell membrane, serving both as a receptor for the preprotein-SecB complex and as an ATP-driven molecular motor driving the stepwise translocation of polypeptide chains across the membrane. This chain is Protein translocase subunit SecA, found in Bartonella tribocorum (strain CIP 105476 / IBS 506).